Consider the following 90-residue polypeptide: Probable Fe(2+)-trafficking protein (90 aa).

This sequence belongs to the Fe(2+)-trafficking protein family.

In terms of biological role, could be a mediator in iron transactions between iron acquisition and iron-requiring processes, such as synthesis and/or repair of Fe-S clusters in biosynthetic enzymes. The protein is Probable Fe(2+)-trafficking protein of Polynucleobacter asymbioticus (strain DSM 18221 / CIP 109841 / QLW-P1DMWA-1) (Polynucleobacter necessarius subsp. asymbioticus).